A 151-amino-acid chain; its full sequence is Large ribosomal subunit protein uL13 (151 aa).

This sequence belongs to the universal ribosomal protein uL13 family. As to quaternary structure, part of the 50S ribosomal subunit.

In terms of biological role, this protein is one of the early assembly proteins of the 50S ribosomal subunit, although it is not seen to bind rRNA by itself. It is important during the early stages of 50S assembly. This Synechococcus sp. (strain JA-2-3B'a(2-13)) (Cyanobacteria bacterium Yellowstone B-Prime) protein is Large ribosomal subunit protein uL13.